Here is a 138-residue protein sequence, read N- to C-terminus: Putative pre-16S rRNA nuclease (138 aa).

Belongs to the YqgF nuclease family.

Its subcellular location is the cytoplasm. Its function is as follows. Could be a nuclease involved in processing of the 5'-end of pre-16S rRNA. The protein is Putative pre-16S rRNA nuclease of Listeria monocytogenes serotype 4b (strain CLIP80459).